Consider the following 172-residue polypeptide: Stellate protein CG33243 (172 aa).

The protein belongs to the casein kinase 2 subunit beta family. In terms of assembly, interacts in vitro with the casein kinase 2 alpha subunit (CkII-alpha). The relevance of such interaction is however unclear in vivo. Probably not expressed in wild-type flies. In males lacking the Y chromosome, it is testis-specific and constitutes the main component of star-shaped crystals.

Functionally, unknown. In males lacking the Y chromosome, its strong overexpression leads to the appearance of proteinaceous star-shaped crystals in the primary spermatocytes causing meiotic drive, possibly by interfering with normal casein kinase 2 activity. The polypeptide is Stellate protein CG33243 (Ste:CG33243) (Drosophila melanogaster (Fruit fly)).